A 463-amino-acid polypeptide reads, in one-letter code: NADH dehydrogenase [ubiquinone] iron-sulfur protein 2, mitochondrial (463 aa).

A mitochondrion-targeting transit peptide spans 1–33; that stretch reads MAALRALCGFRGVAAQVLRPGAGVRLPIQPSRG. K62 carries the N6-acetyllysine modification. At R118 the chain carries Symmetric dimethylarginine. [4Fe-4S] cluster contacts are provided by C326, C332, and C347.

It belongs to the complex I 49 kDa subunit family. As to quaternary structure, core subunit of respiratory chain NADH dehydrogenase (Complex I) which is composed of 45 different subunits. Component of the iron-sulfur (IP) fragment of the enzyme. Interacts with NDUFAF3. Interacts with NDUFAF7. Interacts with CERS2. The cofactor is [4Fe-4S] cluster. In terms of processing, dimethylation at Arg-118 by NDUFAF7 takes place after NDUFS2 assembles into the complex I, leading to stabilize the early intermediate complex.

Its subcellular location is the mitochondrion inner membrane. The catalysed reaction is a ubiquinone + NADH + 5 H(+)(in) = a ubiquinol + NAD(+) + 4 H(+)(out). Functionally, core subunit of the mitochondrial membrane respiratory chain NADH dehydrogenase (Complex I) which catalyzes electron transfer from NADH through the respiratory chain, using ubiquinone as an electron acceptor. Essential for the catalytic activity of complex I. Essential for the assembly of complex I. Redox-sensitive, critical component of the oxygen-sensing pathway in the pulmonary vasculature which plays a key role in acute pulmonary oxygen-sensing and hypoxic pulmonary vasoconstriction. Plays an important role in carotid body sensing of hypoxia. Essential for glia-like neural stem and progenitor cell proliferation, differentiation and subsequent oligodendrocyte or neuronal maturation. The sequence is that of NADH dehydrogenase [ubiquinone] iron-sulfur protein 2, mitochondrial (NDUFS2) from Homo sapiens (Human).